Reading from the N-terminus, the 68-residue chain is DNA-directed RNA polymerase subunit omega (68 aa).

Belongs to the RNA polymerase subunit omega family. The RNAP catalytic core consists of 2 alpha, 1 beta, 1 beta' and 1 omega subunit. When a sigma factor is associated with the core the holoenzyme is formed, which can initiate transcription.

It catalyses the reaction RNA(n) + a ribonucleoside 5'-triphosphate = RNA(n+1) + diphosphate. Promotes RNA polymerase assembly. Latches the N- and C-terminal regions of the beta' subunit thereby facilitating its interaction with the beta and alpha subunits. The chain is DNA-directed RNA polymerase subunit omega from Chromobacterium violaceum (strain ATCC 12472 / DSM 30191 / JCM 1249 / CCUG 213 / NBRC 12614 / NCIMB 9131 / NCTC 9757 / MK).